The primary structure comprises 160 residues: Ribosomal RNA large subunit methyltransferase H (160 aa).

S-adenosyl-L-methionine-binding positions include leucine 76, glycine 108, and 127–132 (LGKMTW).

The protein belongs to the RNA methyltransferase RlmH family. Homodimer.

Its subcellular location is the cytoplasm. The catalysed reaction is pseudouridine(1915) in 23S rRNA + S-adenosyl-L-methionine = N(3)-methylpseudouridine(1915) in 23S rRNA + S-adenosyl-L-homocysteine + H(+). Specifically methylates the pseudouridine at position 1915 (m3Psi1915) in 23S rRNA. This Sinorhizobium medicae (strain WSM419) (Ensifer medicae) protein is Ribosomal RNA large subunit methyltransferase H.